The primary structure comprises 89 residues: Small ribosomal subunit protein uS15 (89 aa).

Belongs to the universal ribosomal protein uS15 family. In terms of assembly, part of the 30S ribosomal subunit. Forms a bridge to the 50S subunit in the 70S ribosome, contacting the 23S rRNA.

Its function is as follows. One of the primary rRNA binding proteins, it binds directly to 16S rRNA where it helps nucleate assembly of the platform of the 30S subunit by binding and bridging several RNA helices of the 16S rRNA. Functionally, forms an intersubunit bridge (bridge B4) with the 23S rRNA of the 50S subunit in the ribosome. This chain is Small ribosomal subunit protein uS15, found in Pseudomonas fluorescens (strain Pf0-1).